A 183-amino-acid chain; its full sequence is Small ribosomal subunit protein uS4c (183 aa).

Positions 82-143 (MRLDNILFRL…KQRSKALIQN (62 aa)) constitute an S4 RNA-binding domain.

This sequence belongs to the universal ribosomal protein uS4 family. Part of the 30S ribosomal subunit. Contacts protein S5. The interaction surface between S4 and S5 is involved in control of translational fidelity.

The protein resides in the plastid. It localises to the chloroplast. In terms of biological role, one of the primary rRNA binding proteins, it binds directly to 16S rRNA where it nucleates assembly of the body of the 30S subunit. Its function is as follows. With S5 and S12 plays an important role in translational accuracy. This Schizorhiza neglecta (Lapeirousia neglecta) protein is Small ribosomal subunit protein uS4c (rps4).